We begin with the raw amino-acid sequence, 2326 residues long: Nonribosomal peptide synthetase inpB (2326 aa).

A Carrier 1 domain is found at 8 to 84 (SPSEWLQLEL…SLYSMAQGPA (77 aa)). Residue S45 is modified to O-(pantetheine 4'-phosphoryl)serine. Residues 87 to 121 (ASSSTSDNASDKDSSLDDSETGALTPTTDAGSSLA) are disordered. Positions 108-121 (GALTPTTDAGSSLA) are enriched in polar residues. The tract at residues 144 to 568 (QAVVPCSAIQ…LLSPGEVSQL (425 aa)) is condensation 1. An adenylation 1 region spans residues 593-997 (LQPGAAAVNS…GRRDTQVKIR (405 aa)). The region spanning 1145-1221 (EPSTETEFKL…DLARAVESRV (77 aa)) is the Carrier 2 domain. An O-(pantetheine 4'-phosphoryl)serine modification is found at S1182. Residues 1226-1247 (DEEDPAPFSVWRESRGSEPSEE) are disordered. Positions 1266-1680 (EDVLPCTALQ…LLSPEDVNQL (415 aa)) are condensation 2. An adenylation 2 region spans residues 1702-2097 (EVARSRPGAA…GRIDTQIKIR (396 aa)). A Carrier 3 domain is found at 2216–2294 (PPSTEMEKAL…DLAVLLEKRP (79 aa)). Residue S2253 is modified to O-(pantetheine 4'-phosphoryl)serine.

The protein belongs to the NRP synthetase family.

Its pathway is secondary metabolite biosynthesis. Functionally, nonribosomal peptide synthetase; part of the inp gene cluster that mediates the biosynthesis of fellutamide B, a mycotoxin that acts as a proteasome inhibitor. In the first step of fellutabmide B biosynthesis inpC activates 3-hydroxydodecanoic acid to generate 3-hydroxydodecanoyl-AMP that is then loaded onto the T0 domain of inpB. The 3-hydroxydodecanoyl-S-phosphopantetheinyl-T0 is sequentially extended with L-Asn and L-Gln by the two CAT modules of inpB. The linear lipodipeptide from inpB is then transferred onto inpA for the addition of the third amino acid, L-Leu. Reductive releasing of the lipotripeptide by the TE domain of inpA produces (2S)-fellutamide B. InpF might be involved in the release and transfer of the lipodipeptide from inpB to inpA. The inp cluster-encoded proteasome subunit inpE confers resistance to internally produced fellutamides. The MFS efflux transporter inpD may contribute to fellutamide resistance as well. The protein is Nonribosomal peptide synthetase inpB of Emericella nidulans (strain FGSC A4 / ATCC 38163 / CBS 112.46 / NRRL 194 / M139) (Aspergillus nidulans).